We begin with the raw amino-acid sequence, 224 residues long: tRNA (guanine-N(7)-)-methyltransferase (224 aa).

Residues Glu56, Glu81, Asp108, and Asp131 each coordinate S-adenosyl-L-methionine. Residue Asp131 is part of the active site. Substrate-binding positions include Lys135, Asp167, and 202–205 (TKFE).

This sequence belongs to the class I-like SAM-binding methyltransferase superfamily. TrmB family.

The enzyme catalyses guanosine(46) in tRNA + S-adenosyl-L-methionine = N(7)-methylguanosine(46) in tRNA + S-adenosyl-L-homocysteine. Its pathway is tRNA modification; N(7)-methylguanine-tRNA biosynthesis. Functionally, catalyzes the formation of N(7)-methylguanine at position 46 (m7G46) in tRNA. This chain is tRNA (guanine-N(7)-)-methyltransferase, found in Nitrosomonas eutropha (strain DSM 101675 / C91 / Nm57).